The chain runs to 1353 residues: Trifunctional purine biosynthetic protein adenosine-3 (1353 aa).

Residues 114 to 321 (KDFMLRHGIP…LFDVMEACCS (208 aa)) form the ATP-grasp domain. Residues 193-196 (EELL), Glu-200, Arg-223, and Asn-232 each bind ATP. Glu-291 and Asn-293 together coordinate Mg(2+). Residues 441–1155 (GLSYKDSGVD…QKMLSQRRKR (715 aa)) are AIRS domain. 2 positions are modified to phosphoserine: Ser-814 and Ser-816. The segment at 1153 to 1353 (RKRVAVLISG…ALISPEVSSQ (201 aa)) is GART domain. N(1)-(5-phospho-beta-D-ribosyl)glycinamide is bound at residue 1164 to 1166 (GSN). (6R)-10-formyltetrahydrofolate is bound by residues Arg-1219, 1244-1247 (MRVL), and Asn-1261. The active-site Proton donor is His-1263. (6R)-10-formyltetrahydrofolate is bound at residue 1295-1299 (DEGVD). Residue 1325-1328 (HKAE) participates in N(1)-(5-phospho-beta-D-ribosyl)glycinamide binding.

This sequence in the N-terminal section; belongs to the GARS family. The protein in the central section; belongs to the AIR synthase family. It in the C-terminal section; belongs to the GART family. In terms of assembly, homodimer. It depends on Mg(2+) as a cofactor. Requires Mn(2+) as cofactor.

It catalyses the reaction 5-phospho-beta-D-ribosylamine + glycine + ATP = N(1)-(5-phospho-beta-D-ribosyl)glycinamide + ADP + phosphate + H(+). The catalysed reaction is 2-formamido-N(1)-(5-O-phospho-beta-D-ribosyl)acetamidine + ATP = 5-amino-1-(5-phospho-beta-D-ribosyl)imidazole + ADP + phosphate + H(+). It carries out the reaction N(1)-(5-phospho-beta-D-ribosyl)glycinamide + (6R)-10-formyltetrahydrofolate = N(2)-formyl-N(1)-(5-phospho-beta-D-ribosyl)glycinamide + (6S)-5,6,7,8-tetrahydrofolate + H(+). It functions in the pathway purine metabolism; IMP biosynthesis via de novo pathway; 5-amino-1-(5-phospho-D-ribosyl)imidazole from N(2)-formyl-N(1)-(5-phospho-D-ribosyl)glycinamide: step 2/2. Its pathway is purine metabolism; IMP biosynthesis via de novo pathway; N(1)-(5-phospho-D-ribosyl)glycinamide from 5-phospho-alpha-D-ribose 1-diphosphate: step 2/2. The protein operates within purine metabolism; IMP biosynthesis via de novo pathway; N(2)-formyl-N(1)-(5-phospho-D-ribosyl)glycinamide from N(1)-(5-phospho-D-ribosyl)glycinamide (10-formyl THF route): step 1/1. In terms of biological role, trifunctional enzyme that catalyzes three distinct reactions as part of the 'de novo' inosine monophosphate biosynthetic pathway. In Drosophila melanogaster (Fruit fly), this protein is Trifunctional purine biosynthetic protein adenosine-3.